Consider the following 938-residue polypeptide: Isoleucine--tRNA ligase (938 aa).

The short motif at 58-68 is the 'HIGH' region element; the sequence is PYANGNIHIGH. Glu-563 contacts L-isoleucyl-5'-AMP. Positions 604–608 match the 'KMSKS' region motif; that stretch reads KMSKS. ATP is bound at residue Lys-607. Positions 903, 906, 921, and 924 each coordinate Zn(2+).

Belongs to the class-I aminoacyl-tRNA synthetase family. IleS type 1 subfamily. In terms of assembly, monomer. Zn(2+) serves as cofactor.

It localises to the cytoplasm. It catalyses the reaction tRNA(Ile) + L-isoleucine + ATP = L-isoleucyl-tRNA(Ile) + AMP + diphosphate. Catalyzes the attachment of isoleucine to tRNA(Ile). As IleRS can inadvertently accommodate and process structurally similar amino acids such as valine, to avoid such errors it has two additional distinct tRNA(Ile)-dependent editing activities. One activity is designated as 'pretransfer' editing and involves the hydrolysis of activated Val-AMP. The other activity is designated 'posttransfer' editing and involves deacylation of mischarged Val-tRNA(Ile). In Buchnera aphidicola subsp. Schizaphis graminum (strain Sg), this protein is Isoleucine--tRNA ligase.